Here is a 366-residue protein sequence, read N- to C-terminus: D-alanine--D-alanine ligase (366 aa).

Residues 148-357 form the ATP-grasp domain; the sequence is KMTFEQAGLA…FPELVDRLIQ (210 aa). 184-239 lines the ATP pocket; the sequence is EAALGYPAFVKPANLGSSVGIAKVRSRQELEAALDNAASYDRRLVVEAGVVAREVE. Residues D310, E324, and N326 each contribute to the Mg(2+) site.

Belongs to the D-alanine--D-alanine ligase family. Mg(2+) serves as cofactor. Mn(2+) is required as a cofactor.

It localises to the cytoplasm. The enzyme catalyses 2 D-alanine + ATP = D-alanyl-D-alanine + ADP + phosphate + H(+). It functions in the pathway cell wall biogenesis; peptidoglycan biosynthesis. Cell wall formation. The chain is D-alanine--D-alanine ligase from Nostoc punctiforme (strain ATCC 29133 / PCC 73102).